A 275-amino-acid chain; its full sequence is Thymidylate synthase (275 aa).

DUMP is bound at residue 138–139 (RR). The active-site Nucleophile is the cysteine 158. DUMP contacts are provided by residues 178–181 (RSCD), asparagine 189, and 219–221 (HIY). Position 181 (aspartate 181) interacts with (6R)-5,10-methylene-5,6,7,8-tetrahydrofolate. Alanine 274 lines the (6R)-5,10-methylene-5,6,7,8-tetrahydrofolate pocket.

It belongs to the thymidylate synthase family. Bacterial-type ThyA subfamily. As to quaternary structure, homodimer.

The protein localises to the cytoplasm. The enzyme catalyses dUMP + (6R)-5,10-methylene-5,6,7,8-tetrahydrofolate = 7,8-dihydrofolate + dTMP. It participates in pyrimidine metabolism; dTTP biosynthesis. Its function is as follows. Catalyzes the reductive methylation of 2'-deoxyuridine-5'-monophosphate (dUMP) to 2'-deoxythymidine-5'-monophosphate (dTMP) while utilizing 5,10-methylenetetrahydrofolate (mTHF) as the methyl donor and reductant in the reaction, yielding dihydrofolate (DHF) as a by-product. This enzymatic reaction provides an intracellular de novo source of dTMP, an essential precursor for DNA biosynthesis. The chain is Thymidylate synthase from Fusobacterium nucleatum subsp. nucleatum (strain ATCC 25586 / DSM 15643 / BCRC 10681 / CIP 101130 / JCM 8532 / KCTC 2640 / LMG 13131 / VPI 4355).